Consider the following 481-residue polypeptide: Bindin (481 aa).

A signal peptide spans Met1–Ala20. Positions Glu21–Arg245 are excised as a propeptide. Basic and acidic residues-rich tracts occupy residues Asp154–Ser163 and Arg178–Lys189. Disordered regions lie at residues Asp154–Pro193 and Gly219–Lys243. The tract at residues Leu352–Asn360 is fucose-binding domain. The segment at Ser376–Gly481 is disordered. Residues Gln379–Ala389 show a composition bias toward acidic residues. Over residues Ala406–Ala416 the composition is skewed to gly residues. Composition is skewed to low complexity over residues Met417 to Pro440 and Gly464 to Gly481.

This sequence belongs to the bindin family.

The protein localises to the cytoplasmic vesicle. The protein resides in the secretory vesicle. Its subcellular location is the acrosome lumen. Functionally, species-specific sea urchin sperm protein required for adhesion of sperm to the egg surface during fertilization. Bindin coats the acrosomal process after it is externalized by the acrosome reaction. It binds to sulfated, fucose-containing polysaccharides on the vitelline layer receptor proteoglycans which cover the egg plasma membrane. The sequence is that of Bindin from Strongylocentrotus purpuratus (Purple sea urchin).